The primary structure comprises 225 residues: uncharacterized protein (225 aa).

This is an uncharacterized protein from Bacillus subtilis (strain 168).